Here is a 399-residue protein sequence, read N- to C-terminus: Tryptophan synthase beta chain (399 aa).

An N6-(pyridoxal phosphate)lysine modification is found at lysine 92.

It belongs to the TrpB family. In terms of assembly, tetramer of two alpha and two beta chains. It depends on pyridoxal 5'-phosphate as a cofactor.

It catalyses the reaction (1S,2R)-1-C-(indol-3-yl)glycerol 3-phosphate + L-serine = D-glyceraldehyde 3-phosphate + L-tryptophan + H2O. It participates in amino-acid biosynthesis; L-tryptophan biosynthesis; L-tryptophan from chorismate: step 5/5. In terms of biological role, the beta subunit is responsible for the synthesis of L-tryptophan from indole and L-serine. This chain is Tryptophan synthase beta chain, found in Thiobacillus denitrificans (strain ATCC 25259 / T1).